Here is a 295-residue protein sequence, read N- to C-terminus: Indole-3-glycerol phosphate synthase (295 aa).

The protein belongs to the TrpC family.

The enzyme catalyses 1-(2-carboxyphenylamino)-1-deoxy-D-ribulose 5-phosphate + H(+) = (1S,2R)-1-C-(indol-3-yl)glycerol 3-phosphate + CO2 + H2O. It functions in the pathway amino-acid biosynthesis; L-tryptophan biosynthesis; L-tryptophan from chorismate: step 4/5. The protein is Indole-3-glycerol phosphate synthase of Synechococcus sp. (strain ATCC 27144 / PCC 6301 / SAUG 1402/1) (Anacystis nidulans).